Here is a 223-residue protein sequence, read N- to C-terminus: Glutathione S-transferase A2 (223 aa).

At alanine 2 the chain carries N-acetylalanine. The 81-residue stretch at 3 to 83 folds into the GST N-terminal domain; the sequence is GKPKLHYFNG…YIATKYNLYG (81 aa). N6-succinyllysine is present on lysine 4. Glutathione is bound by residues tyrosine 9, arginine 45, 54 to 55, and 67 to 68; these read QV and QT. One can recognise a GST C-terminal domain in the interval 85 to 208; it reads DMKERALIDM…QPGSQRKPPM (124 aa).

This sequence belongs to the GST superfamily. Alpha family. In terms of assembly, homodimer. In terms of tissue distribution, expressed in corpus luteum, adrenal gland, testis, liver, lung, thyroid and kidney.

Its subcellular location is the cytoplasm. It catalyses the reaction RX + glutathione = an S-substituted glutathione + a halide anion + H(+). Conjugation of reduced glutathione to a wide number of exogenous and endogenous hydrophobic electrophiles. This chain is Glutathione S-transferase A2 (GSTA2), found in Bos taurus (Bovine).